The chain runs to 702 residues: Kinesin-like protein KIF3A (702 aa).

The 332-residue stretch at 14–345 folds into the Kinesin motor domain; the sequence is NVKVVVRCRP…LRYANRAKNI (332 aa). 100 to 107 provides a ligand contact to ATP; sequence GQTGTGKT. Residues 355–593 adopt a coiled-coil conformation; the sequence is PKDALLRQFQ…LSRELRLQML (239 aa). Disordered stretches follow at residues 372–424 and 667–702; these read KKLE…KMIE and LMKL…SLLQ. Acidic residues predominate over residues 376 to 400; sequence EGEEISGSDISGSEEDDDEEGEVGE. The segment covering 410 to 424 has biased composition (basic and acidic residues); that stretch reads DQAGKKKVSPDKMIE. The tract at residues 600–702 is globular; it reads PRDYQEMIEN…PETVIDSLLQ (103 aa). A compositionally biased stretch (basic residues) spans 675 to 690; the sequence is TSKGKARPKTGRRKRS. Position 690 is a phosphoserine (serine 690).

This sequence belongs to the TRAFAC class myosin-kinesin ATPase superfamily. Kinesin family. Kinesin II subfamily. In terms of assembly, heterodimer of KIF3A and KIF3B. Interacts with CIMAP3. Interacts with CLN3. Interacts with DCTN1. Interacts with FLCN. Interacts with AP3B1.

The protein localises to the cytoplasm. It is found in the cytoskeleton. Its subcellular location is the cell projection. It localises to the cilium. The protein resides in the microtubule organizing center. The protein localises to the centrosome. It is found in the centriole. In terms of biological role, microtubule-based anterograde translocator for membranous organelles. Plus end-directed microtubule sliding activity in vitro. Plays a role in primary cilia formation. Plays a role in centriole cohesion and subdistal appendage organization and function. Regulates the formation of the subdistal appendage via recruitment of DCTN1 to the centriole. Also required for ciliary basal feet formation and microtubule anchoring to mother centriole. The chain is Kinesin-like protein KIF3A (KIF3A) from Macaca fascicularis (Crab-eating macaque).